The chain runs to 185 residues: Probable RNA polymerase sigma-C factor (185 aa).

The short motif at 52 to 65 (DLTQETFLRAIGAI) is the Polymerase core binding element. Residues 149–168 (YADAAAVCGCPVGTIRSRVA) constitute a DNA-binding region (H-T-H motif).

This sequence belongs to the sigma-70 factor family. ECF subfamily.

Sigma factors are initiation factors that promote the attachment of RNA polymerase to specific initiation sites and are then released. This chain is Probable RNA polymerase sigma-C factor (sigC), found in Mycobacterium bovis (strain ATCC BAA-935 / AF2122/97).